The sequence spans 519 residues: ATP synthase subunit alpha 2 (519 aa).

G179–T186 contacts ATP.

The protein belongs to the ATPase alpha/beta chains family. F-type ATPases have 2 components, CF(1) - the catalytic core - and CF(0) - the membrane proton channel. CF(1) has five subunits: alpha(3), beta(3), gamma(1), delta(1), epsilon(1). CF(0) has three main subunits: a(1), b(2) and c(9-12). The alpha and beta chains form an alternating ring which encloses part of the gamma chain. CF(1) is attached to CF(0) by a central stalk formed by the gamma and epsilon chains, while a peripheral stalk is formed by the delta and b chains.

It localises to the cell inner membrane. It carries out the reaction ATP + H2O + 4 H(+)(in) = ADP + phosphate + 5 H(+)(out). Functionally, produces ATP from ADP in the presence of a proton gradient across the membrane. The alpha chain is a regulatory subunit. The sequence is that of ATP synthase subunit alpha 2 from Syntrophus aciditrophicus (strain SB).